Here is a 424-residue protein sequence, read N- to C-terminus: Tyrosine--tRNA ligase (424 aa).

Residue Tyr-37 coordinates L-tyrosine. The short motif at 42 to 51 (PTADSLHLGH) is the 'HIGH' region element. The residue at position 144 (Lys-144) is an N6-acetyllysine. Residues Tyr-175 and Gln-179 each coordinate L-tyrosine. Positions 235 to 239 (KFGKT) match the 'KMSKS' region motif. Position 238 (Lys-238) interacts with ATP. The S4 RNA-binding domain maps to 357 to 414 (ADLMQALVDSELQPSRGQARKTIASNAITINGEKQSDPEYFFKEEDRLFGRFTLLRRG).

The protein belongs to the class-I aminoacyl-tRNA synthetase family. TyrS type 1 subfamily. In terms of assembly, homodimer.

The protein localises to the cytoplasm. It catalyses the reaction tRNA(Tyr) + L-tyrosine + ATP = L-tyrosyl-tRNA(Tyr) + AMP + diphosphate + H(+). Functionally, catalyzes the attachment of tyrosine to tRNA(Tyr) in a two-step reaction: tyrosine is first activated by ATP to form Tyr-AMP and then transferred to the acceptor end of tRNA(Tyr). In Shigella dysenteriae serotype 1 (strain Sd197), this protein is Tyrosine--tRNA ligase.